The following is a 242-amino-acid chain: MEFQSDLTREISPQRKLGRGKIEIKRIENTTNRQVTFCKRRNGLLKKAYELSVLCDAEVALIVFSSRGRLYEYANNSVKATIERYKKACSDSSNTGSIAEANAQYYQQEASKLRAQIGNLQNQNRNFLGESLAALNLRDLRNLEQKIEKGISKIRAKKNELLFAEIEYMQKREIDLHNNNQYLRAKIAETERSQQMNLMPGSSSYDLVPPQQSFDARNYLQVNGLQTNNHYPRQDQPPLQLV.

Positions Arg-19–Tyr-73 constitute an MADS-box domain. Residues Ala-103–Ser-193 enclose the K-box domain.

As to expression, expressed exclusively in stamens and carpels.

Its subcellular location is the nucleus. In terms of biological role, probable transcription factor involved in regulating genes that determines stamen and carpel development in wild-type flowers. In Petunia hybrida (Petunia), this protein is Floral homeotic protein AGAMOUS (AG1).